The sequence spans 308 residues: Tryptophan 2,3-dioxygenase (308 aa).

The interval 1-37 (MKPPGDNAPAGCPFSGARAAQPAHEAPHVPGDAAGET) is disordered. Residues 77-81 (FIIQH), Tyr-139, and Arg-143 contribute to the substrate site. A heme-binding site is contributed by His-266. Residue Thr-280 participates in substrate binding.

The protein belongs to the tryptophan 2,3-dioxygenase family. Homotetramer. It depends on heme as a cofactor.

It carries out the reaction L-tryptophan + O2 = N-formyl-L-kynurenine. It functions in the pathway amino-acid degradation; L-tryptophan degradation via kynurenine pathway; L-kynurenine from L-tryptophan: step 1/2. Heme-dependent dioxygenase that catalyzes the oxidative cleavage of the L-tryptophan (L-Trp) pyrrole ring and converts L-tryptophan to N-formyl-L-kynurenine. Catalyzes the oxidative cleavage of the indole moiety. In Burkholderia ambifaria (strain MC40-6), this protein is Tryptophan 2,3-dioxygenase.